The following is a 115-amino-acid chain: Large ribosomal subunit protein bL20c (115 aa).

The protein belongs to the bacterial ribosomal protein bL20 family.

It is found in the plastid. Its subcellular location is the chloroplast. Binds directly to 23S ribosomal RNA and is necessary for the in vitro assembly process of the 50S ribosomal subunit. It is not involved in the protein synthesizing functions of that subunit. This is Large ribosomal subunit protein bL20c (rpl20) from Mesostigma viride (Green alga).